Here is an 858-residue protein sequence, read N- to C-terminus: MFTLAEVASLNDIQPTYRILKPWWDVFMDYLAVVMLMVAIFAGTMQLTKDQVVCLPVLPSPANSKAHTPPGNADVTTEVPKMETATPQDQNGQTTNDIAFGTSAVTPDIPLQATYSHAESTFPSQETKKEKRDPTGRKTNLDFQQYVFINQMCYHLALPWYSKYFPYLALIHTIILMVSSNFWFKYPKTCSKVEHFVSILGKCFESPWTTKALSETACEDSEENKQRITGAQTLPKHVSTSSDEGSPSASTPMINKTGFKFSAEKPVIEVPSMTILDKKDGEQAKALFEKVRKFRAHVEDSDLIYKLYVVQTLIKTAKFIFILCYTANFVNAISFEHVCKPKVEHLTGYEVFECTHNMAYMLKKLLISYISIICVYGFICLYTLFWLFRIPLKEYSFEKVREESSFSDIPDVKNDFAFLLHMVDQYDQLYSKRFGVFLSEVSENKLREISLNHEWTFEKLRQHVSRNAQDKQELHLFMLSGVPDAVFDLTDLDVLKLELIPEAKIPAKISQMTNLQELHLCHCPAKVEQTAFSFLRDHLRCLHVKFTDVAEIPAWVYLLKNLRELYLIGNLNSENNKMIGLESLRELRHLKILHVKSNLTKVPSNITDVAPHLTKLVIHNDGTKLLVLNSLKKMMNVAELELQNCELERIPHAIFSLSNLQELDLKSNSIRTIEEIISFQHLKRLTCLKLWHNKIVAIPPSITHVKNLESLYFSNNKLESLPVAVFSLQKLRCLDVSYNNISTIPIEIGLLQNLQHLHITGNKVDVLPKQLFKCVKLRTLNLGQNCIASLPEKISQLSQLTQLELKGNCLDRLPAQLGQCRMLKKSGLVVEDQLFDTLPLEVKEALNQDVNVPFANGI.

At 1 to 22 (MFTLAEVASLNDIQPTYRILKP) the chain is on the cytoplasmic side. A helical membrane pass occupies residues 23–48 (WWDVFMDYLAVVMLMVAIFAGTMQLT). The Extracellular portion of the chain corresponds to 49-163 (KDQVVCLPVL…YHLALPWYSK (115 aa)). Cysteine 54 and cysteine 354 are oxidised to a cystine. The disordered stretch occupies residues 118 to 137 (AESTFPSQETKKEKRDPTGR). Residues 126–137 (ETKKEKRDPTGR) are compositionally biased toward basic and acidic residues. A helical transmembrane segment spans residues 164–182 (YFPYLALIHTIILMVSSNF). Residues 183–308 (WFKYPKTCSK…EDSDLIYKLY (126 aa)) lie on the Cytoplasmic side of the membrane. Positions 221-251 (SEENKQRITGAQTLPKHVSTSSDEGSPSAST) are disordered. The span at 227–251 (RITGAQTLPKHVSTSSDEGSPSAST) shows a compositional bias: polar residues. Phosphoserine is present on residues serine 241, serine 242, and serine 246. The helical transmembrane segment at 309–330 (VVQTLIKTAKFIFILCYTANFV) threads the bilayer. Topologically, residues 331 to 360 (NAISFEHVCKPKVEHLTGYEVFECTHNMAY) are extracellular. A helical membrane pass occupies residues 361–386 (MLKKLLISYISIICVYGFICLYTLFW). Residues 387–858 (LFRIPLKEYS…DVNVPFANGI (472 aa)) lie on the Cytoplasmic side of the membrane. 13 LRR repeats span residues 514 to 534 (NLQELHLCHCPAKVEQTAFSF), 538 to 559 (HLRCLHVKFTDVAEIPAWVYLL), 561 to 582 (NLRELYLIGNLNSENNKMIGLE), 589 to 609 (HLKILHVKSNLTKVPSNITDV), 612 to 632 (HLTKLVIHNDGTKLLVLNSLK), 636 to 657 (NVAELELQNCELERIPHAIFSL), 659 to 680 (NLQELDLKSNSIRTIEEIISFQ), 684 to 705 (RLTCLKLWHNKIVAIPPSITHV), 707 to 728 (NLESLYFSNNKLESLPVAVFSL), 730 to 751 (KLRCLDVSYNNISTIPIEIGLL), 753 to 774 (NLQHLHITGNKVDVLPKQLFKC), 776 to 797 (KLRTLNLGQNCIASLPEKISQL), and 799 to 820 (QLTQLELKGNCLDRLPAQLGQC).

This sequence belongs to the LRRC8 family. As to quaternary structure, heterohexamer; oligomerizes with other LRRC8 proteins (LRRC8A, LRRC8B, LRRC8C and/or LRRC8E) to form a heterohexamer. In vivo, the subunit composition may depend primarily on expression levels, and heterooligomeric channels containing various proportions of the different LRRC8 proteins may coexist.

Its subcellular location is the cell membrane. It is found in the endoplasmic reticulum membrane. It carries out the reaction chloride(in) = chloride(out). The enzyme catalyses iodide(out) = iodide(in). The catalysed reaction is taurine(out) = taurine(in). Functionally, non-essential component of the volume-regulated anion channel (VRAC, also named VSOAC channel), an anion channel required to maintain a constant cell volume in response to extracellular or intracellular osmotic changes. The VRAC channel conducts iodide better than chloride and can also conduct organic osmolytes like taurine. Plays a redundant role in the efflux of amino acids, such as aspartate, in response to osmotic stress. Channel activity requires LRRC8A plus at least one other family member (LRRC8B, LRRC8C, LRRC8D or LRRC8E); channel characteristics depend on the precise subunit composition. Also acts as a regulator of glucose-sensing in pancreatic beta cells: VRAC currents, generated in response to hypotonicity- or glucose-induced beta cell swelling, depolarize cells, thereby causing electrical excitation, leading to increase glucose sensitivity and insulin secretion. VRAC channels containing LRRC8D inhibit transport of immunoreactive cyclic dinucleotide GMP-AMP (2'-3'-cGAMP), an immune messenger produced in response to DNA virus in the cytosol. The sequence is that of Volume-regulated anion channel subunit LRRC8D from Rattus norvegicus (Rat).